The following is a 175-amino-acid chain: Zinc finger A20 and AN1 domain-containing stress-associated protein 7 (175 aa).

An A20-type zinc finger spans residues 13–47; it reads PTEPKLCDNGCGFFGSPSNMNLCSKCYRSLRAEED. Zn(2+) contacts are provided by C19, C23, C35, C38, C116, C119, C130, C132, C137, H140, H146, and C148. The segment at 110-156 adopts an AN1-type zinc-finger fold; it reads VRPNNRCFSCNKKVGVMGFKCKCGSTFCGSHRYPEKHECSFDFKEVG.

May be involved in environmental stress response. This is Zinc finger A20 and AN1 domain-containing stress-associated protein 7 (SAP7) from Arabidopsis thaliana (Mouse-ear cress).